The following is a 115-amino-acid chain: NADH-ubiquinone oxidoreductase chain 3 (115 aa).

3 helical membrane passes run 4-24 (LLAM…AFWL), 55-75 (FFLV…LLPI), and 87-107 (MMLT…YEWI).

It belongs to the complex I subunit 3 family. Core subunit of respiratory chain NADH dehydrogenase (Complex I) which is composed of 45 different subunits. Interacts with TMEM186. Interacts with TMEM242.

Its subcellular location is the mitochondrion inner membrane. The catalysed reaction is a ubiquinone + NADH + 5 H(+)(in) = a ubiquinol + NAD(+) + 4 H(+)(out). Core subunit of the mitochondrial membrane respiratory chain NADH dehydrogenase (Complex I) which catalyzes electron transfer from NADH through the respiratory chain, using ubiquinone as an electron acceptor. Essential for the catalytic activity of complex I. In Neotoma floridana (Eastern woodrat), this protein is NADH-ubiquinone oxidoreductase chain 3.